Reading from the N-terminus, the 168-residue chain is uncharacterized protein (168 aa).

The N-terminal 29 residues, 1–29 (MGWRFPSPSPRQASPVAPLLAAPTAVRSC), are a transit peptide targeting the mitochondrion. Basic and acidic residues predominate over residues 98 to 110 (GETKARRAREEGK). The disordered stretch occupies residues 98-152 (GETKARRAREEGKLPSLGNAPAPRRRSVAWPAAEGSCAAPESSPPASEASLPAPE). Low complexity predominate over residues 128–152 (PAAEGSCAAPESSPPASEASLPAPE).

Its subcellular location is the mitochondrion. This is an uncharacterized protein from Homo sapiens (Human).